Consider the following 533-residue polypeptide: 2-succinyl-5-enolpyruvyl-6-hydroxy-3-cyclohexene-1-carboxylate synthase (533 aa).

It belongs to the TPP enzyme family. MenD subfamily. As to quaternary structure, homodimer. The cofactor is Mg(2+). Requires Mn(2+) as cofactor. It depends on thiamine diphosphate as a cofactor.

It catalyses the reaction isochorismate + 2-oxoglutarate + H(+) = 5-enolpyruvoyl-6-hydroxy-2-succinyl-cyclohex-3-ene-1-carboxylate + CO2. Its pathway is quinol/quinone metabolism; 1,4-dihydroxy-2-naphthoate biosynthesis; 1,4-dihydroxy-2-naphthoate from chorismate: step 2/7. It participates in quinol/quinone metabolism; menaquinone biosynthesis. Its function is as follows. Catalyzes the thiamine diphosphate-dependent decarboxylation of 2-oxoglutarate and the subsequent addition of the resulting succinic semialdehyde-thiamine pyrophosphate anion to isochorismate to yield 2-succinyl-5-enolpyruvyl-6-hydroxy-3-cyclohexene-1-carboxylate (SEPHCHC). This is 2-succinyl-5-enolpyruvyl-6-hydroxy-3-cyclohexene-1-carboxylate synthase from Akkermansia muciniphila (strain ATCC BAA-835 / DSM 22959 / JCM 33894 / BCRC 81048 / CCUG 64013 / CIP 107961 / Muc).